A 766-amino-acid chain; its full sequence is 5-methyltetrahydropteroyltriglutamate--homocysteine methyltransferase (766 aa).

5-methyltetrahydropteroyltri-L-glutamate-binding positions include 16 to 19 (RELK) and Lys117. L-homocysteine contacts are provided by residues 442–444 (IGS) and Glu495. Residues 442–444 (IGS) and Glu495 each bind L-methionine. Residues 526–527 (RC) and Trp572 contribute to the 5-methyltetrahydropteroyltri-L-glutamate site. An L-homocysteine-binding site is contributed by Asp610. Asp610 contacts L-methionine. A 5-methyltetrahydropteroyltri-L-glutamate-binding site is contributed by Glu616. Residues His652, Cys654, and Glu676 each contribute to the Zn(2+) site. The active-site Proton donor is the His705. A Zn(2+)-binding site is contributed by Cys737.

Belongs to the vitamin-B12 independent methionine synthase family. Zn(2+) is required as a cofactor.

It carries out the reaction 5-methyltetrahydropteroyltri-L-glutamate + L-homocysteine = tetrahydropteroyltri-L-glutamate + L-methionine. It participates in amino-acid biosynthesis; L-methionine biosynthesis via de novo pathway; L-methionine from L-homocysteine (MetE route): step 1/1. In terms of biological role, catalyzes the transfer of a methyl group from 5-methyltetrahydrofolate to homocysteine resulting in methionine formation. The sequence is that of 5-methyltetrahydropteroyltriglutamate--homocysteine methyltransferase from Bordetella avium (strain 197N).